Here is an 88-residue protein sequence, read N- to C-terminus: Sec-independent protein translocase protein TatA (88 aa).

The helical transmembrane segment at 4 to 24 (LSIWHWLIVLAVVLVLFVGGG) threads the bilayer. Residues 45–88 (ADDETMEGSTGSGGHIAPPGPAAGTVQRDASFSGTGRPSGSSTP) are disordered. Positions 75–88 (SFSGTGRPSGSSTP) are enriched in low complexity.

Belongs to the TatA/E family. As to quaternary structure, the Tat system comprises two distinct complexes: a TatABC complex, containing multiple copies of TatA, TatB and TatC subunits, and a separate TatA complex, containing only TatA subunits. Substrates initially bind to the TatABC complex, which probably triggers association of the separate TatA complex to form the active translocon.

The protein localises to the cell inner membrane. Part of the twin-arginine translocation (Tat) system that transports large folded proteins containing a characteristic twin-arginine motif in their signal peptide across membranes. TatA could form the protein-conducting channel of the Tat system. This chain is Sec-independent protein translocase protein TatA, found in Gluconacetobacter diazotrophicus (strain ATCC 49037 / DSM 5601 / CCUG 37298 / CIP 103539 / LMG 7603 / PAl5).